We begin with the raw amino-acid sequence, 248 residues long: Probable succinyl-CoA:3-ketoacid coenzyme A transferase subunit A (248 aa).

24–30 (GGFGLCG) serves as a coordination point for CoA.

This sequence belongs to the 3-oxoacid CoA-transferase subunit A family. Heterodimer of a subunit A and a subunit B.

The catalysed reaction is a 3-oxo acid + succinyl-CoA = a 3-oxoacyl-CoA + succinate. The sequence is that of Probable succinyl-CoA:3-ketoacid coenzyme A transferase subunit A (scoA) from Mycobacterium bovis (strain ATCC BAA-935 / AF2122/97).